A 293-amino-acid chain; its full sequence is Signal recognition particle receptor FtsY (293 aa).

GTP is bound by residues 93–100, 175–179, and 239–242; these read GVNGAGKT, DTAGR, and TKLD.

It belongs to the GTP-binding SRP family. FtsY subfamily. As to quaternary structure, part of the signal recognition particle protein translocation system, which is composed of SRP and FtsY. SRP is a ribonucleoprotein composed of Ffh and a 4.5S RNA molecule.

It is found in the cell inner membrane. It localises to the cytoplasm. The enzyme catalyses GTP + H2O = GDP + phosphate + H(+). In terms of biological role, involved in targeting and insertion of nascent membrane proteins into the cytoplasmic membrane. Acts as a receptor for the complex formed by the signal recognition particle (SRP) and the ribosome-nascent chain (RNC). Interaction with SRP-RNC leads to the transfer of the RNC complex to the Sec translocase for insertion into the membrane, the hydrolysis of GTP by both Ffh and FtsY, and the dissociation of the SRP-FtsY complex into the individual components. The polypeptide is Signal recognition particle receptor FtsY (Helicobacter pylori (strain J99 / ATCC 700824) (Campylobacter pylori J99)).